A 428-amino-acid chain; its full sequence is Serine--tRNA ligase (428 aa).

An L-serine-binding site is contributed by 235–237; it reads TAE. An ATP-binding site is contributed by 266–268; the sequence is RSE. Glu289 lines the L-serine pocket. 353-356 provides a ligand contact to ATP; that stretch reads EISS. Residue Ser389 participates in L-serine binding.

This sequence belongs to the class-II aminoacyl-tRNA synthetase family. Type-1 seryl-tRNA synthetase subfamily. As to quaternary structure, homodimer. The tRNA molecule binds across the dimer.

It is found in the cytoplasm. It catalyses the reaction tRNA(Ser) + L-serine + ATP = L-seryl-tRNA(Ser) + AMP + diphosphate + H(+). It carries out the reaction tRNA(Sec) + L-serine + ATP = L-seryl-tRNA(Sec) + AMP + diphosphate + H(+). It functions in the pathway aminoacyl-tRNA biosynthesis; selenocysteinyl-tRNA(Sec) biosynthesis; L-seryl-tRNA(Sec) from L-serine and tRNA(Sec): step 1/1. Its function is as follows. Catalyzes the attachment of serine to tRNA(Ser). Is also able to aminoacylate tRNA(Sec) with serine, to form the misacylated tRNA L-seryl-tRNA(Sec), which will be further converted into selenocysteinyl-tRNA(Sec). This is Serine--tRNA ligase from Shewanella denitrificans (strain OS217 / ATCC BAA-1090 / DSM 15013).